We begin with the raw amino-acid sequence, 69 residues long: Cytochrome c oxidase subunit 8A, mitochondrial (69 aa).

The transit peptide at 1 to 25 (MSVLTPLLLRSLTGSARRLMVPRAQ) directs the protein to the mitochondrion. An SIFI-degron motif is present at residues 2–19 (SVLTPLLLRSLTGSARRL). At 26 to 36 (VHSKPAREQLG) the chain is on the mitochondrial matrix side. Residues 37–60 (VLDITIGLTSCFVCCLLPAGWVLS) form a helical membrane-spanning segment. At 61–69 (HLESYKKRE) the chain is on the mitochondrial intermembrane side.

Belongs to the cytochrome c oxidase VIII family. Component of the cytochrome c oxidase (complex IV, CIV), a multisubunit enzyme composed of 14 subunits. The complex is composed of a catalytic core of 3 subunits MT-CO1, MT-CO2 and MT-CO3, encoded in the mitochondrial DNA, and 11 supernumerary subunits COX4I, COX5A, COX5B, COX6A, COX6B, COX6C, COX7A, COX7B, COX7C, COX8 and NDUFA4, which are encoded in the nuclear genome. The complex exists as a monomer or a dimer and forms supercomplexes (SCs) in the inner mitochondrial membrane with NADH-ubiquinone oxidoreductase (complex I, CI) and ubiquinol-cytochrome c oxidoreductase (cytochrome b-c1 complex, complex III, CIII), resulting in different assemblies (supercomplex SCI(1)III(2)IV(1) and megacomplex MCI(2)III(2)IV(2)). In terms of processing, in response to mitochondrial stress, the precursor protein is ubiquitinated by the SIFI complex in the cytoplasm before mitochondrial import, leading to its degradation. Within the SIFI complex, UBR4 initiates ubiquitin chain that are further elongated or branched by KCMF1.

The protein resides in the mitochondrion inner membrane. It functions in the pathway energy metabolism; oxidative phosphorylation. In terms of biological role, component of the cytochrome c oxidase, the last enzyme in the mitochondrial electron transport chain which drives oxidative phosphorylation. The respiratory chain contains 3 multisubunit complexes succinate dehydrogenase (complex II, CII), ubiquinol-cytochrome c oxidoreductase (cytochrome b-c1 complex, complex III, CIII) and cytochrome c oxidase (complex IV, CIV), that cooperate to transfer electrons derived from NADH and succinate to molecular oxygen, creating an electrochemical gradient over the inner membrane that drives transmembrane transport and the ATP synthase. Cytochrome c oxidase is the component of the respiratory chain that catalyzes the reduction of oxygen to water. Electrons originating from reduced cytochrome c in the intermembrane space (IMS) are transferred via the dinuclear copper A center (CU(A)) of subunit 2 and heme A of subunit 1 to the active site in subunit 1, a binuclear center (BNC) formed by heme A3 and copper B (CU(B)). The BNC reduces molecular oxygen to 2 water molecules using 4 electrons from cytochrome c in the IMS and 4 protons from the mitochondrial matrix. This chain is Cytochrome c oxidase subunit 8A, mitochondrial (Cox8a), found in Mus musculus (Mouse).